A 177-amino-acid chain; its full sequence is Large ribosomal subunit protein uL5 (177 aa).

This sequence belongs to the universal ribosomal protein uL5 family. Part of the 50S ribosomal subunit; part of the 5S rRNA/L5/L18/L25 subcomplex. Contacts the 5S rRNA and the P site tRNA. Forms a bridge to the 30S subunit in the 70S ribosome.

Its function is as follows. This is one of the proteins that bind and probably mediate the attachment of the 5S RNA into the large ribosomal subunit, where it forms part of the central protuberance. In the 70S ribosome it contacts protein S13 of the 30S subunit (bridge B1b), connecting the 2 subunits; this bridge is implicated in subunit movement. Contacts the P site tRNA; the 5S rRNA and some of its associated proteins might help stabilize positioning of ribosome-bound tRNAs. The protein is Large ribosomal subunit protein uL5 of Ehrlichia chaffeensis (strain ATCC CRL-10679 / Arkansas).